The following is a 145-amino-acid chain: MHPAHLLVLLGVCVSLLGASDIPPLPLNLVQFSYLIRCANKYKRPGWHYANYGCYCGSGGRGTPVDDVDRCCQAHDKCYEDAEKLGCYPKWTTYYYYCGANGPYCKTRTKCQRFVCNCDVVAADCFASYPYNRRYWFYSNKKRCR.

The N-terminal stretch at 1–19 (MHPAHLLVLLGVCVSLLGA) is a signal peptide. A propeptide spanning residues 20 to 27 (SDIPPLPL) is cleaved from the precursor. 7 disulfide bridges follow: Cys38/Cys98, Cys54/Cys144, Cys56/Cys72, Cys71/Cys125, Cys78/Cys118, Cys87/Cys111, and Cys105/Cys116. Positions 55, 57, and 59 each coordinate Ca(2+). The active site involves His75. Asp76 serves as a coordination point for Ca(2+). Asp119 is an active-site residue.

Belongs to the phospholipase A2 family. Group I subfamily. D49 sub-subfamily. Heterohexamer. 2 forms exist: 2 A or 2 B chains, 2 C chains and 2 covalently-linked D chains, and 1 A or 1 B, 1 C, 2 covalently-linked D chains and 2 differentially glycosylated covalently-linked D chains. Textilotoxin was originally described as pentameric. Requires Ca(2+) as cofactor. Expressed by the venom gland.

It localises to the secreted. It catalyses the reaction a 1,2-diacyl-sn-glycero-3-phosphocholine + H2O = a 1-acyl-sn-glycero-3-phosphocholine + a fatty acid + H(+). Its function is as follows. Snake venom oligomeric phospholipase A2 that has potent presynaptic neurotoxicity. Chain A possesses a very low toxicity, but is essential for neurotoxicity. Possesses a low enzymatic activity. PLA2 catalyzes the calcium-dependent hydrolysis of the 2-acyl groups in 3-sn-phosphoglycerides. In Pseudonaja textilis (Eastern brown snake), this protein is Basic phospholipase A2 textilotoxin A chain.